We begin with the raw amino-acid sequence, 670 residues long: Protein HBS1 (670 aa).

Disordered stretches follow at residues 60–88 (KDIQ…ESFQ) and 164–202 (KTVS…VSGR). The segment covering 63–75 (QEEEADEDEDEDA) has biased composition (acidic residues). The span at 189-200 (PSPKVPSSPVVS) shows a compositional bias: low complexity. Positions 245–468 (KSHIHMIVIG…DVIENFKIPE (224 aa)) constitute a tr-type G domain. The tract at residues 254-261 (GHVDAGKS) is G1. 254–261 (GHVDAGKS) contacts GTP. The tract at residues 310–314 (GITMD) is G2. The tract at residues 331–334 (DAPG) is G3. GTP-binding positions include 393-396 (NKLD) and 432-434 (SGL). Residues 393 to 396 (NKLD) form a G4 region. The segment at 432–434 (SGL) is G5.

The protein belongs to the TRAFAC class translation factor GTPase superfamily. Classic translation factor GTPase family. In terms of assembly, component of the Pelota-HBS1L complex, also named Dom34-Hbs1 complex, composed of pelo and HBS1. Expressed in ovaries (at protein level).

It localises to the cytoplasm. It catalyses the reaction GTP + H2O = GDP + phosphate + H(+). Functionally, GTPase component of the Pelota-HBS1L complex, a complex that recognizes stalled ribosomes and triggers the No-Go Decay (NGD) pathway. The Pelota-HBS1L complex recognizes ribosomes stalled at the 3' end of an mRNA and engages stalled ribosomes by destabilizing mRNA in the mRNA channel. Following ribosome-binding, the Pelota-HBS1L complex promotes recruitment of pix, which drives the disassembly of stalled ribosomes, followed by degradation of damaged mRNAs as part of the NGD pathway. Together with pelo, required for transposon silencing in the ovary and testis. Together with pelo, promotes meiosis and spermatid individualization during spermatogenesis. The protein is Protein HBS1 of Drosophila melanogaster (Fruit fly).